The chain runs to 523 residues: Synaptotagmin-10 (523 aa).

Over 1–55 (MSFRKEDGVSSLCQKALHIITELCFAGQVEWDKCSGIFPADRSGQGGGGTDISVS) the chain is Vesicular. The segment at 13–35 (CQKALHIITELCFAGQVEWDKCS) is cysteine motif. A helical transmembrane segment spans residues 56-76 (LLAVVVSFCGLALLVVSLFVF). Residues 77–523 (WKLCWPCWKS…CSSPRPPSTP (447 aa)) are Cytoplasmic-facing. Thr-136 carries the phosphothreonine modification. 2 C2 domains span residues 231–352 (TCGK…TVWK) and 363–496 (DLGE…THWH). 11 residues coordinate Ca(2+): Asp-262, Asp-268, Asp-320, Phe-321, Asp-322, Ser-325, Asp-328, Asp-394, Asp-400, Asp-454, and Asp-456.

Belongs to the synaptotagmin family. As to quaternary structure, homodimer; disulfide-linked via the cysteine motif. Can also form heterodimers with SYT3, SYT6, SYT7 and SYT9. Ca(2+) serves as cofactor. As to expression, highly expressed in the olfactory bulb.

The protein localises to the cytoplasmic vesicle. Its subcellular location is the secretory vesicle membrane. Functionally, ca(2+) sensor specifically required for the Ca(2+)-dependent exocytosis of secretory vesicles containing IGF1 in neurons of the olfactory bulb. Exocytosis of IGF1 is required for sensory perception of smell. Not involved in Ca(2+)-dependent synaptic vesicle exocytosis. Acts through Ca(2+) and phospholipid binding to the C2 domain: Ca(2+) induces binding of the C2-domains to phospholipid membranes and to assembled SNARE-complexes; both actions contribute to triggering exocytosis. This is Synaptotagmin-10 from Mus musculus (Mouse).